The following is a 297-amino-acid chain: uncharacterized protein (297 aa).

This is an uncharacterized protein from Frog virus 3 (isolate Goorha) (FV-3).